Consider the following 1343-residue polypeptide: MVYSYSEKKRIRKDFGKRPKVLDIPYLLSIQLDSFKKFTDQDPTGERGFEAAFRSVFPIKSFSGNSELQYVSYKLGEPVFDVKECQIRGITYAAPLRVKLRMVLYDREAAPGTVKDIKEQEVYMGDIPLMTNNGTFVINGTERVIVSQLHRSPGVFFDHDRGKTHSSGKVLYNARIIPYRGSWLDFEFDPKDALFVRIDRRRKLPASIMLRALDYSTQDILDLFFDRVNFKIKKDSLVMDLVPERLRGETASYDIKDSDGSILVEKGRRVTARHIRQLEKSKTTELEVPVDYIEGKIAGQDYIDPDTGEVLVSANAEITLEDLAKLSMAGIKEISTLYINDLDNGAYMSDTLRIDSTTNRLEALVEIYRMMRPGEPPTKDAAEGLFQNLFFSEERYDLSKVGRMKFNRRLSIGEDEGSGILSKEDIVAVMKNIITIRNGGDEVDDIDHLGNRRIRSVGEMAENQFRVGLVRVERAVRERLSLGDLNELMPQDLINAKPISAAVKEFFGSSQLSQFMDQNNPLSEVTHKRRISALGPGGLTRERAGFEVRDVHPTHYGRLCPIETPEGPNIGLINSLASFARTNSYGFLETPYRKVEDGVVTDQIDYLSAIEEGRYVIAQANIDIDKNGRLLEEQVACRHKGDSTFMRGTDIQYMDVSPQQIISVAASLIPFLEHDDANRALMGANMQRQAVPTLRADKPLVGTGIERIIAVDSGVVVVAKRGGSIDYVDASRIVVKVNESELRPGEAGIDIYNLTKYTRSNQNTCINQRPCCSVGDPVVVGDVLADGPSTDLGDLAFGQNMRIAFMPWNGYNFEDSILISERVAQEDRFTTIHIQELSCIARDTKLGSEEITADIPNVGESALSKLDESGIVYIGAEVKGGDILVGKVTPKGETQLTPEEKLLRAIFGEKASDVKDSSLRVPNSVKGTIIDVQVFTRDGVEKDKRAVEIEEMHIAQAKKDLTEEFKILEEGVYGRARNLLLNAGFEQAQLDAIPRSHLLVQTIDDEAKQTELEQLAEQHDELKADFDKKFEIKRRKITQGDDLAPGVLKIVKVYLAVKRTIQPGDKMAGRHGNKGVISKINPVEDMPYDENGNPIDIVLNPLGVPSRMNIGQILEVHMGAAAKGIGDQITAMLEEQRQLAEIRGYIKEVYELGDEVLQRVDIDSFTDDEVLRLAKNLKGGIPIATPAFDGAKEKEIKEMLALAKLPTSGQRTLYDGRTGNEFERKVTVGYMYMLKLNHLVDDKMHARSTGSYSLVTQQPLGGKAQFGGQRFGEMEVWALEAYGAAYTLQEMLTVKSDDVNGRTQMYKNIVDGNYQMQPGMPESFNVLLKEIRSLGINIELDQD.

It belongs to the RNA polymerase beta chain family. The RNAP catalytic core consists of 2 alpha, 1 beta, 1 beta' and 1 omega subunit. When a sigma factor is associated with the core the holoenzyme is formed, which can initiate transcription.

It carries out the reaction RNA(n) + a ribonucleoside 5'-triphosphate = RNA(n+1) + diphosphate. Its function is as follows. DNA-dependent RNA polymerase catalyzes the transcription of DNA into RNA using the four ribonucleoside triphosphates as substrates. This chain is DNA-directed RNA polymerase subunit beta, found in Shewanella violacea.